A 490-amino-acid polypeptide reads, in one-letter code: Gram-negative bacteria-binding protein 3 (490 aa).

Residues 1–25 (MADALRFVAWSCCLQLLFLLLGVQG) form the signal peptide. A CBM39 domain is found at 26-126 (YEVPKAKIDV…GSFVVNGYSG (101 aa)). In terms of domain architecture, GH16 spans 162–490 (TEVNGAPTRC…KIDYVKVYSL (329 aa)). Residues Asn362 and Asn373 are each glycosylated (N-linked (GlcNAc...) asparagine).

The protein belongs to the insect beta-1,3-glucan binding protein family.

It localises to the secreted. Functionally, involved in the recognition of invading microorganisms. Binds specifically to beta-1,3-glucan and activates the phenoloxidase cascade. In Drosophila melanogaster (Fruit fly), this protein is Gram-negative bacteria-binding protein 3.